A 391-amino-acid chain; its full sequence is Pyruvate dehydrogenase E1 component subunit beta-3, chloroplastic (391 aa).

Residues 1-35 constitute a chloroplast transit peptide; the sequence is MATAAAASLQYALHGAASASAKPRSAAPGRSVRVV. Position 127 (Glu127) interacts with thiamine diphosphate. The K(+) site is built by Ile180, Ala228, Ile229, and Asn233.

In terms of assembly, tetramer of 2 alpha and 2 beta subunits. It depends on thiamine diphosphate as a cofactor.

It is found in the plastid. It localises to the chloroplast. It carries out the reaction N(6)-[(R)-lipoyl]-L-lysyl-[protein] + pyruvate + H(+) = N(6)-[(R)-S(8)-acetyldihydrolipoyl]-L-lysyl-[protein] + CO2. Its function is as follows. The pyruvate dehydrogenase complex catalyzes the overall conversion of pyruvate to acetyl-CoA and CO(2). It contains multiple copies of three enzymatic components: pyruvate dehydrogenase (E1), dihydrolipoamide acetyltransferase (E2) and lipoamide dehydrogenase (E3). The sequence is that of Pyruvate dehydrogenase E1 component subunit beta-3, chloroplastic from Oryza sativa subsp. japonica (Rice).